Reading from the N-terminus, the 693-residue chain is TGF-beta-activated kinase 1 and MAP3K7-binding protein 2 (693 aa).

In terms of domain architecture, CUE spans 8–51 (IDFQVLHDLRQKFPEVPEVVVSRCMLQNNNNLDACCAVLSQEST). A disordered region spans residues 91 to 130 (GREGSRMNGSRTLTHSISDGQLQGGQSNSELFQQEPQTAP). Polar residues predominate over residues 97-130 (MNGSRTLTHSISDGQLQGGQSNSELFQQEPQTAP). At R173 the chain carries Asymmetric dimethylarginine. The interval 219–310 (ITTPGGTTRQ…SGSSQSSAHS (92 aa)) is disordered. Low complexity predominate over residues 220-231 (TTPGGTTRQTQQ). The segment covering 232 to 282 (HSGWVSQFNPMNPQQVYQPSQPGPWTTCPASNPLSHTSSQQPNQQGHQTSH) has biased composition (polar residues). The segment covering 286 to 310 (PISSPTTSQPPTIHSSGSSQSSAHS) has biased composition (low complexity). K329 is covalently cross-linked (Glycyl lysine isopeptide (Lys-Gly) (interchain with G-Cter in SUMO)). Residues 330-381 (LEPPQRNNSSKLRSSGPRTSSTSSSVNSQTLNRNQPTVYIAASPPNTDELMS) are disordered. Residues 343–359 (SSGPRTSSTSSSVNSQT) are compositionally biased toward low complexity. Residues S372, S450, S482, and S524 each carry the phosphoserine modification. Positions 532 to 619 (YTQALLVHQK…TKEIDLFQAR (88 aa)) form a coiled coil. K562 participates in a covalent cross-link: Glycyl lysine isopeptide (Lys-Gly) (interchain with G-Cter in SUMO). Phosphoserine is present on S582. A Glycyl lysine isopeptide (Lys-Gly) (interchain with G-Cter in ubiquitin) cross-link involves residue K611. The segment at 642-663 (PPKPKDQRSIIKTPKTQDTEDD) is disordered. The RanBP2-type zinc finger occupies 663–693 (DEGAQWNCTACTFLNHPALIRCEQCEMPRHF). A (Microbial infection) S-methylcysteine modification is found at C673. The tract at residues 675–685 (FLNHPALIRCE) is interaction with polyubiquitin.

As to quaternary structure, interacts with MAP3K7 and TRAF6. Identified in the TRIKA2 complex composed of MAP3K7, TAB1 and TAB2. Binds 'Lys-63'-linked polyubiquitin chains. Interacts with NCOR1 and HDAC3 to form a ternary complex. Interacts (via C-terminal) with NUMBL (via PTB domain). Interacts (via the C-terminus) with DYNC2I2 (via WD domains). Interacts with RBCK1. Interacts with TRIM5. Interacts with TRIM38 (via B30.2/SPRY domain), leading to its translocation to lysosomes and degradation. Interacts with ASB1; this interaction promotes TAB2 stability. Post-translationally, degraded in a lysosome-dependent manner following interaction with TRIM38. SUMOylated by TRIM60; leading to inhibition of MAPK/NF-kappaB activation and the innate immune response. In terms of processing, ubiquitinated; following IL1 stimulation or TRAF6 overexpression. Ubiquitination involves RBCK1 leading to proteasomal degradation. Ubiquitinated at Lys-611 by TRIM45 leading to proteasomal degradation. Post-translationally, phosphorylated. (Microbial infection) Methylated at Cys-673 by enteropathogenic E.coli protein NleE or S.flexneri protein OspZ: methylation disrupts zinc-binding and ability to bind 'Lys-63'-linked ubiquitin, leading to NF-kappa-B inactivation. In terms of tissue distribution, widely expressed. In the embryo, expressed in the ventricular trabeculae, endothelial cells of the conotruncal cushions of the outflow tract and in the endothelial cells lining the developing aortic valves.

It localises to the membrane. The protein localises to the endosome membrane. Its subcellular location is the lysosome membrane. The protein resides in the cytoplasm. It is found in the cytosol. In terms of biological role, adapter required to activate the JNK and NF-kappa-B signaling pathways through the specific recognition of 'Lys-63'-linked polyubiquitin chains by its RanBP2-type zinc finger (NZF). Acts as an adapter linking MAP3K7/TAK1 and TRAF6 to 'Lys-63'-linked polyubiquitin chains. The RanBP2-type zinc finger (NZF) specifically recognizes Lys-63'-linked polyubiquitin chains unanchored or anchored to the substrate proteins such as RIPK1/RIP1 and RIPK2: this acts as a scaffold to organize a large signaling complex to promote autophosphorylation of MAP3K7/TAK1, and subsequent activation of I-kappa-B-kinase (IKK) core complex by MAP3K7/TAK1. Also recognizes and binds Lys-63'-linked polyubiquitin chains of heterotypic 'Lys-63'-/'Lys-48'-linked branched ubiquitin chains. Regulates the IL1-mediated translocation of NCOR1 out of the nucleus. Involved in heart development. The sequence is that of TGF-beta-activated kinase 1 and MAP3K7-binding protein 2 from Homo sapiens (Human).